We begin with the raw amino-acid sequence, 164 residues long: C-phycoerythrin alpha chain (164 aa).

Residues cysteine 82 and cysteine 139 each contribute to the (2R,3E)-phycoerythrobilin site.

It belongs to the phycobiliprotein family. Heterodimer of an alpha and a beta chain. Contains two covalently linked bilin chromophores.

It localises to the cellular thylakoid membrane. In terms of biological role, light-harvesting photosynthetic bile pigment-protein from the phycobiliprotein complex. The polypeptide is C-phycoerythrin alpha chain (cpeA) (Synechocystis sp. (strain PCC 6701)).